The primary structure comprises 243 residues: Mesoderm posterior protein 1 (243 aa).

The interval M1 to K86 is disordered. A compositionally biased stretch (polar residues) spans D27–W36. Positions G76 to L130 constitute a bHLH domain. Positions C153–P157 match the CPLCP motif. Positions A204–L228 are disordered.

As to expression, no expression was detected in adult tissues except the testis. Expression in the testis was regulated developmentally; expressed 2 weeks after birth, and increases, reaching the full expression level in mature testes.

The protein resides in the nucleus. In terms of biological role, transcription factor. Plays a role in the epithelialization of somitic mesoderm and in the development of cardiac mesoderm. Defines the rostrocaudal patterning of the somites by participating in distinct Notch pathways. This chain is Mesoderm posterior protein 1 (Mesp1), found in Mus musculus (Mouse).